A 472-amino-acid polypeptide reads, in one-letter code: Mixed lineage kinase domain-like protein (472 aa).

An N-terminal bundle and brace (NBB); mediates INSP6 binding region spans residues 1 to 143 (MDKLGQIIKL…QEDRQDAEED (143 aa)). A coiled-coil region spans residues 61–81 (LGRFDEVLKEANQQIEKFSKK). Ser-124 carries the phosphoserine modification. Positions 138–229 (QDAEEDGNEN…VFNNPQAESV (92 aa)) form a coiled coil. Residues 192–456 (GPPWTKLKTS…DGRSLSGRER (265 aa)) enclose the Protein kinase domain. ATP contacts are provided by residues 198 to 206 (LKTSKMSTI) and Lys-219. Residues Ser-345 and Ser-347 each carry the phosphoserine; by RIPK3 modification. A Phosphothreonine; by RIPK3 modification is found at Thr-349. At Ser-352 the chain carries Phosphoserine; by RIPK3.

Belongs to the protein kinase superfamily. Homooligomer. Homotrimer; forms homotrimers on necroptosis induction. Upon TNF-induced necrosis, forms in complex with PGAM5, RIPK1 and RIPK3. Within this complex, may play a role in the proper targeting of RIPK1-RIPK3 to its downstream effector PGAM5. Interacts with RIPK3; the interaction is direct and promotes its phosphorylation and subsequent activation. In terms of processing, phosphorylation by RIPK3 induces a conformational switch that is required for necroptosis. It also induces homotrimerization and localization to the plasma membrane. As to expression, highly expressed in thymus, colon, intestine, liver, spleen and lung. Expressed at much lower level in skeletal muscle, heart and kidney. Not detected in brain.

It localises to the cytoplasm. Its subcellular location is the cell membrane. It is found in the nucleus. Activated via binding to highly phosphorylated inositol phosphates such as inositolhexakisphosphate (InsP6) which mediates the release of an N-terminal auto-inhibitory region. Activation requires not only RIPK3-dependent phosphorylation but also binding to highly phosphorylated inositol phosphates. Its function is as follows. Pseudokinase that plays a key role in TNF-induced necroptosis, a programmed cell death process. Does not have protein kinase activity. Activated following phosphorylation by RIPK3, leading to homotrimerization, localization to the plasma membrane and execution of programmed necrosis characterized by calcium influx and plasma membrane damage. In addition to TNF-induced necroptosis, necroptosis can also take place in the nucleus in response to orthomyxoviruses infection: following ZBP1 activation, which senses double-stranded Z-RNA structures, nuclear RIPK3 catalyzes phosphorylation and activation of MLKL, promoting disruption of the nuclear envelope and leakage of cellular DNA into the cytosol. Binds to highly phosphorylated inositol phosphates such as inositolhexakisphosphate (InsP6) which is essential for its necroptotic function. This Mus musculus (Mouse) protein is Mixed lineage kinase domain-like protein.